A 356-amino-acid chain; its full sequence is Glutamine synthetase nodule isozyme (356 aa).

The region spanning 19-99 (IIAEYIWIGG…VMCDAYTPAG (81 aa)) is the GS beta-grasp domain. Residues 41 to 66 (PGPVSDPSKLPKWNYDGSSTGQAPGE) are disordered. The 251-residue stretch at 106 to 356 (KRHNAAKIFS…IADTTILWKP (251 aa)) folds into the GS catalytic domain.

It belongs to the glutamine synthetase family. As to quaternary structure, homooctamer.

Its subcellular location is the cytoplasm. The enzyme catalyses L-glutamate + NH4(+) + ATP = L-glutamine + ADP + phosphate + H(+). In Vigna aconitifolia (Moth bean), this protein is Glutamine synthetase nodule isozyme.